Here is a 619-residue protein sequence, read N- to C-terminus: Long-chain fatty acid transport protein 6 (619 aa).

2 consecutive transmembrane segments (helical) span residues 22-42 (LLFP…LIII) and 119-139 (VHVW…NTNI). 221–232 (YIFTSGTTGLPK) provides a ligand contact to AMP.

Belongs to the ATP-dependent AMP-binding enzyme family. Strongly expressed in heart and localizes to cardiac myocytes. Expressed at moderate levels in placenta, testis, and adrenal glands. Expressed at very low levels in kidney, bladder and uterus.

It localises to the cell membrane. It is found in the sarcolemma. It catalyses the reaction a fatty acid(in) = a fatty acid(out). The enzyme catalyses hexadecanoate(out) = hexadecanoate(in). It carries out the reaction (9Z)-octadecenoate(out) = (9Z)-octadecenoate(in). The catalysed reaction is (9Z,12Z)-octadecadienoate(out) = (9Z,12Z)-octadecadienoate(in). It catalyses the reaction a very long-chain fatty acid + ATP + CoA = a very long-chain fatty acyl-CoA + AMP + diphosphate. The enzyme catalyses tetracosanoate + ATP + CoA = tetracosanoyl-CoA + AMP + diphosphate. It carries out the reaction a long-chain fatty acid + ATP + CoA = a long-chain fatty acyl-CoA + AMP + diphosphate. The catalysed reaction is (5Z,8Z,11Z,14Z)-eicosatetraenoate + ATP + CoA = (5Z,8Z,11Z,14Z)-eicosatetraenoyl-CoA + AMP + diphosphate. It catalyses the reaction (9Z)-octadecenoate + ATP + CoA = (9Z)-octadecenoyl-CoA + AMP + diphosphate. Mediates the import of long-chain fatty acids (LCFA) into the cell by facilitating their transport at the plasma membrane. Also functions as an acyl-CoA ligase catalyzing the ATP-dependent formation of fatty acyl-CoA using LCFA and very-long-chain fatty acids (VLCFA) as substrates. Plays a pivotal role in regulating available LCFA substrates from exogenous sources in tissues undergoing high levels of beta-oxidation such as the heart. This Homo sapiens (Human) protein is Long-chain fatty acid transport protein 6 (SLC27A6).